A 567-amino-acid polypeptide reads, in one-letter code: Glucose-6-phosphate isomerase, cytosolic (567 aa).

The Proton donor role is filled by Glu360. Residues His391 and Lys516 contribute to the active site.

Belongs to the GPI family. Homodimer.

It localises to the cytoplasm. It catalyses the reaction alpha-D-glucose 6-phosphate = beta-D-fructose 6-phosphate. It participates in carbohydrate degradation; glycolysis; D-glyceraldehyde 3-phosphate and glycerone phosphate from D-glucose: step 2/4. The sequence is that of Glucose-6-phosphate isomerase, cytosolic (PHI1) from Zea mays (Maize).